The primary structure comprises 293 residues: MTAQTQQSIMAKLALYAQLSRIDRPIGTLLLLWPCLMALLFAAKGMPDIKVLLIFILGVVIMRACGCIINDYADRNLDAHVERTKQRPLASGAISSKEALSLFALLGLLAFALVLLLNPLVVKLSVVGIVLTIMYPFMKRVTNMPQMFLGIVWSWSIPMAYAAQLGEVPVEAWWLFAANWCWTVAYDTMYAMIDRDDDLKVGIKSSAILFGRFDRQWIAVFQLMAFGCFLMAGLSAEREFIYALGLLGFIAFSVYQQRLIFSRERPACFKAFLNNNWVGMLLFLTLAADYLLY.

The next 8 helical transmembrane spans lie at 26-46, 49-69, 102-122, 148-168, 173-193, 217-237, 240-260, and 272-292; these read IGTLLLLWPCLMALLFAAKGM, IKVLLIFILGVVIMRACGCII, LFALLGLLAFALVLLLNPLVV, FLGIVWSWSIPMAYAAQLGEV, WWLFAANWCWTVAYDTMYAMI, WIAVFQLMAFGCFLMAGLSAE, FIYALGLLGFIAFSVYQQRLI, and FLNNNWVGMLLFLTLAADYLL.

It belongs to the UbiA prenyltransferase family. It depends on Mg(2+) as a cofactor.

It localises to the cell inner membrane. It carries out the reaction all-trans-octaprenyl diphosphate + 4-hydroxybenzoate = 4-hydroxy-3-(all-trans-octaprenyl)benzoate + diphosphate. It participates in cofactor biosynthesis; ubiquinone biosynthesis. Its function is as follows. Catalyzes the prenylation of para-hydroxybenzoate (PHB) with an all-trans polyprenyl group. Mediates the second step in the final reaction sequence of ubiquinone-8 (UQ-8) biosynthesis, which is the condensation of the polyisoprenoid side chain with PHB, generating the first membrane-bound Q intermediate 3-octaprenyl-4-hydroxybenzoate. This chain is 4-hydroxybenzoate octaprenyltransferase, found in Shewanella denitrificans (strain OS217 / ATCC BAA-1090 / DSM 15013).